A 355-amino-acid chain; its full sequence is MSYDVLTINPGSTSTKLAVYHGDKVLFEETVRHTMQEFADFNNVQEQFDFRWQVLRRVIDAFGYDVNKLDAVVGRGGLLRPVAGGTYMVTEKMLADLKNNKYGEHASNLGAMLAKKLADKLGIPSFIVDPVVVDEMQPVARFSGNELIARKSIFHALNHKAAGRKIAKELGSEYEKMNFVIAHLGGGISVAAHRQGKAVDVNNALDGDGPFSPERSGSLPMNDFLEACFSGKWTKRELHELIVGRGGMISYLGTNSMLDVENKVQAGDEDAIKAFDAMAYQVSKEIGACSVVLHGKIDAIILTGGLARSELFTSKIIEQTNWIARVIIEPGEDELEALNSGVQRVLAGIEKEKVY.

It belongs to the acetokinase family.

It localises to the cytoplasm. It carries out the reaction butanoate + ATP = butanoyl phosphate + ADP. The chain is Probable butyrate kinase from Listeria innocua serovar 6a (strain ATCC BAA-680 / CLIP 11262).